Consider the following 322-residue polypeptide: Putative A-type inclusion protein (322 aa).

The disordered stretch occupies residues 284-322; that stretch reads LTTEATGSVEVAPPSTDVTEPISDVTPSVDVEPEHPPAF.

It belongs to the chordopoxvirinae A26 protein family.

Encodes a truncated version of poxvirus A26 protein. The chain is Putative A-type inclusion protein from Vaccinia virus (strain Copenhagen) (VACV).